Consider the following 95-residue polypeptide: Large ribosomal subunit protein bL25 (95 aa).

It belongs to the bacterial ribosomal protein bL25 family. As to quaternary structure, part of the 50S ribosomal subunit; part of the 5S rRNA/L5/L18/L25 subcomplex. Contacts the 5S rRNA. Binds to the 5S rRNA independently of L5 and L18.

In terms of biological role, this is one of the proteins that binds to the 5S RNA in the ribosome where it forms part of the central protuberance. This Shewanella sp. (strain ANA-3) protein is Large ribosomal subunit protein bL25.